We begin with the raw amino-acid sequence, 942 residues long: MVKAYLKFVQDKVFGLISTSNSILDGSGKLAITGCGERISIWDLRKQVLNQSLYEEDIKAEVTNVCLSKDGALLASGYSDGSIRIWSMSDYQLQAVFNGHRGSVTTMTFNRLGNILVSGSKDTEVIVWDIITESGLFRLRGHRDQITSVKLLERSNHLITSSKDGFIKIWDTETQHCIQTIVGHRNPIWGIDVNPDETRLCSCTSDNQIRFWRIPSNERQREDGSGIEPKFIVNTPINSAVIIPDEINEDGSKKENSNNSNNNDIDDLEIISEEEFAKYYGSITVKAESVSGVRFDPTNKILAVQSTGKFVDLFKITHYDTMKLEEISIVEEMRHRQTIKTSSKVRFFSFGNDIKHWNKFVITLAGNSLEAYEIKEKEQGGGAFEVSSTLDQAGHRSDIRSLSLSSNDQMLVSTSSESVKVWNMKSLSCIRSIACDYGLCTVFAPGNLHVIVGTKTGTIEVFELASAARVASIKAHEGSVWSLVLTPDLRGVTSGGADKLVKFWDFELIASQENSKHKVLNLSLTKTLKVESDVLALKYSADNKFLAVSLLDNTVKIFYTDTVKFHLSLYGHKLPVMCLDISDDSTLIITGSADKNIKIWGLDYGDCHKSFFAHDDSIMQVSFIPSTHHFISASKDKRIKYWDADKFEHIQTIEAHHGEVWSLAMGSVGDFFISGSHDRSIRIFNQTETPIFVESDRQREMEQTWEATLEDDTRMRTKEMLEENAAAGKQTLETIMAGEDILDAIELCVQEKFKIDEYEKLLKTTKNQDEIPLYQPNIIMLGLSPSEYLWNRINRIRPSDLEEALRVLPFSVMRTLFEYFNLWVDQSGKSVEFIFKCSFFLIQTHQNQLSVSTEFIPILQHLNTSIKNRLQKERFTLGFNRSALSFVKREIEINQQYKFFDSDLYLNKNNKNNKDKDSNNNKKDNKKDNKKDNEKSLKRNRK.

13 WD repeats span residues 9-52, 57-96, 99-138, 141-180, 183-222, 285-324, 394-432, 434-472, 475-514, 529-568, 571-612, 613-652, and 655-694; these read VQDK…LNQS, DIKA…LQAV, GHRG…GLFR, GHRD…CIQT, GHRN…RQRE, VKAE…TMKL, GHRS…CIRS, ACDY…RVAS, AHEG…SQEN, KVES…FHLS, GHKL…KSFF, AHDD…HIQT, and AHHG…IFVE. The tract at residues 909-942 is disordered; that stretch reads NNKNNKDKDSNNNKKDNKKDNKKDNEKSLKRNRK. A compositionally biased stretch (basic and acidic residues) spans 912–942; sequence NNKDKDSNNNKKDNKKDNKKDNEKSLKRNRK.

This sequence belongs to the WD repeat WDR3/UTP12 family.

Its subcellular location is the nucleus. It localises to the nucleolus. This Dictyostelium discoideum (Social amoeba) protein is WD repeat-containing protein 3 homolog (wdr3).